Here is a 1830-residue protein sequence, read N- to C-terminus: MENNNLGLRFRKLPRQPLALPKLDPLLDENLEQWPHLNQLVQCYGTEWVKDVNKYGHYENIRPDSFQTQIFEGPDTDTETEIRLASARSATIEEDVASISGRPFSDPGSSKHFGQPPLPAYEPAFDWENERAMIFGQRTPESPAASYSSGLKISVRVLSLAFQSGLVEPFFGSIALYNQERKEKLSEDFYFQIQPTEMQDAKLSSENRGVFYLDAPSASVCLLIQLEKTATEEGGVTSSVYSRKEPVHLTEREKQKLQVWSRIMPYRESFAWAVVPLFDNNLTTNTGESASPSSPLAPSMTASSSHDGVYEPIAKITSDGKQGYSGGSSVVVEISNLNKVKESYSEESIQDPKRKVHKPVKGVLRLEIEKHRNGHGDFEDLSENGSIINDSLDPTDRLSDLTLMKCPSSSSGGPRNGCSKWNSEDAKDVSRNLTSSCGTPDLNCYHAFDFCSTTRNEPFLHLFHCLYVYPVAVTLSRKRNPFIRVELRKDDTDIRKQPLEAIYPREPGVSLQKWVHTQVAVGARAASYHDEIKVSLPATWTPSHHLLFTFFHVDLQTKLEAPRPVVVGYASLPLSTYIHSRSDISLPVMRELVPHYLQESTKERLDYLEDGKNIFKLRLRLCSSLYPTNERVRDFCLEYDRHTLQTRPPWGSELLQAINSLKHVDSTALLQFLYPILNMLLHLIGNGGETLQVAAFRAMVDILTRVQQVSFDDADRNRFLVTYVDYSFDDFGGNQPPVYPGLATVWGSLARSKAKGYRVGPVYDDVLSMAWFFLELIVKSMALEQARLYDHNLPTGEDVPPMQLKESVFRCIMQLFDCLLTEVHERCKKGLSLAKRLNSSLAFFCYDLLYIIEPCQVYELVSLYMDKFSGVCQSVLHECKLTFLQIISDHDLFVEMPGRDPSDRNYLSSILIQELFLSLDHDELPLRAKGARILVILLCKHEFDARYQKAEDKLYIAQLYFPFVGQILDEMPVFYNLNATEKREVLIGVLQIVRNLDDTSLVKAWQQSIARTRLYFKLMEECLILFEHKKAADSILGGNNSRGPVSEGAGSPKYSERLSPAINNYLSEASRQEVRLEGTPDNGYLWQRVNSQLASPSQPYSLREALAQAQSSRIGASAQALRESLHPILRQKLELWEENVSATVSLQVLEITENFSSMAASHNIATDYGKLDCITTILTSFFSRNQSLAFWKAFFPIFNRIFDLHGATLMARENDRFLKQIAFHLLRLAVYRNDSVRKRAVIGLQILVKSSLYFMQTARLRALLTITLSELMSDVQVTHMKSDNTLEESGEARRLQQSLSEMADEAKSVNLLRECGLPDDTLLIIPEKFTENRWSWAEVKHLSDSLVLALDASLGHALLGSVMAMDRYAAAESFYKLGMAFAPVPDLHIMWLLHLCDAHQEMQSWAEAAQCAVAVAGVIMQALVARNDGVWSKDHVSALRKICPMVSGEFTTEASAAEVEGYGASKLTVDSAVKYLQLANKLFSQAELYHFCASILELVIPVYKSRKAYGQLAKCHTLLTNIYESILDQESNPIPFIDATYYRVGFYGEKFGKLDRKEYVYREPRDVRLGDIMEKLSHIYESRMDSNHILHIIPDSRQVKAEDLQAGVCYLQITAVDAVMEDEDLGSRRERIFSLSTGSVRARVFDRFLFDTPFTKNGKTQGGLEDQWKRRTVLQTEGSFPALVNRLLVTKSESLEFSPVENAIGMIETRTTALRNELEEPRSSDGDHLPRLQSLQRILQGSVAVQVNSGVLSVCTAFLSGEPATRLRSQELQQLIAALLEFMAVCKRAIRVHFRLIGEEDQEFHTQLVNGFQSLTAELSHYIPAILSEL.

At Met1 the chain carries N-acetylmethionine. A disordered region spans residues 285–304; it reads NTGESASPSSPLAPSMTASS. Positions 289–304 are enriched in low complexity; it reads SASPSSPLAPSMTASS. One can recognise a C2 DOCK-type domain in the interval 463 to 622; the sequence is FHCLYVYPVA…NIFKLRLRLC (160 aa). Ser1051 carries the post-translational modification Phosphoserine. At Thr1079 the chain carries Phosphothreonine. Ser1095 carries the phosphoserine modification. Residues 1379 to 1828 enclose the DOCKER domain; the sequence is MAFAPVPDLH…LSHYIPAILS (450 aa).

It belongs to the DOCK family. Homodimer. Component of SCAR/WAVE and ARP2/3 complexes. Interacts directly with ARAC4/ROP2, ARAC1/ROP3, ARAC5/ROP4, ARAC6/ROP5, ARAC8/ROP10, ARAC9/ROP8, SCAR1, SCAR2, SCAR3, SCAR4, ABI1, ABI2, ABI3 and ABI4. Binds to the inactive GDP-bound form of ARAC3/ROP6. As to expression, expressed ubiquitously, in roots and aerial organs.

It is found in the cytoplasm. Its subcellular location is the endoplasmic reticulum membrane. The protein resides in the nucleus. Functionally, guanine nucleotide exchange factor (GEF) for Rho and Rac. GEF proteins activate small GTPases by exchanging bound GDP for free GTP. Controls actin polymerization via the two heteromeric complexes WAVE and actin-related protein (ARP) 2/3. Involved in cytoskeletal reorganization required for cell shape (e.g. trichome and cotyledon) control and tissue development. Prevents cortical microtubules organization into parallel arrays oriented perpendicular to the axis of cell elongation to limit anisotropic cell growth during petal development, probably by triggering ARAC4/ROP2 and ARAC3/ROP6 activity. Promotes polarized growth and cell-cell adhesion in the leaf epidermis probably by promoting the formation of endoplasmic reticulum (ER) exit site (ERES) and/or trafficking between the ER and Golgi. Triggers ARAC3/ROP6 activation required for auxin-mediated inhibition of PIN2 internalization during gravitropic responses (, PubMed:22683260). This Arabidopsis thaliana (Mouse-ear cress) protein is Guanine nucleotide exchange factor SPIKE 1.